We begin with the raw amino-acid sequence, 335 residues long: Biotin synthase (335 aa).

Positions 46–274 constitute a Radical SAM core domain; it reads YKVQLASLFS…KSKIRLSAGR (229 aa). C61, C65, and C68 together coordinate [4Fe-4S] cluster. [2Fe-2S] cluster contacts are provided by C105, C137, C197, and R269.

This sequence belongs to the radical SAM superfamily. Biotin synthase family. Homodimer. The cofactor is [4Fe-4S] cluster. It depends on [2Fe-2S] cluster as a cofactor.

The catalysed reaction is (4R,5S)-dethiobiotin + (sulfur carrier)-SH + 2 reduced [2Fe-2S]-[ferredoxin] + 2 S-adenosyl-L-methionine = (sulfur carrier)-H + biotin + 2 5'-deoxyadenosine + 2 L-methionine + 2 oxidized [2Fe-2S]-[ferredoxin]. It functions in the pathway cofactor biosynthesis; biotin biosynthesis; biotin from 7,8-diaminononanoate: step 2/2. In terms of biological role, catalyzes the conversion of dethiobiotin (DTB) to biotin by the insertion of a sulfur atom into dethiobiotin via a radical-based mechanism. The sequence is that of Biotin synthase from Prochlorococcus marinus subsp. pastoris (strain CCMP1986 / NIES-2087 / MED4).